Reading from the N-terminus, the 490-residue chain is Glutathione hydrolase 6 (490 aa).

The Cytoplasmic segment spans residues 1 to 52 (MEPEAGPVLYQKLRVWEPSLESEEEEEEISEQLILDASGPHDSSGNKAGRLP). Residues 53-73 (GAWAQLVAALLLLAIGFSLAV) form a helical; Signal-anchor for type II membrane protein membrane-spanning segment. Residues 74–490 (RQLCSSGASP…PSGCCPFQGF (417 aa)) are Extracellular-facing. N-linked (GlcNAc...) asparagine glycosylation is found at asparagine 160, asparagine 165, and asparagine 374.

It belongs to the gamma-glutamyltransferase family. As to quaternary structure, heterodimer composed of the light and heavy chains. The active site is located in the light chain. In terms of processing, cleaved by autocatalysis into a large and a small subunit and the autocatalytic cleavage is essential to the functional activation of the enzyme.

It localises to the membrane. It carries out the reaction an N-terminal (5-L-glutamyl)-[peptide] + an alpha-amino acid = 5-L-glutamyl amino acid + an N-terminal L-alpha-aminoacyl-[peptide]. It catalyses the reaction glutathione + H2O = L-cysteinylglycine + L-glutamate. The catalysed reaction is an S-substituted glutathione + H2O = an S-substituted L-cysteinylglycine + L-glutamate. Its pathway is sulfur metabolism; glutathione metabolism. Its function is as follows. Hydrolyzes and transfers gamma-glutamyl moieties from glutathione and other gamma-glutamyl compounds to acceptors. In Bos taurus (Bovine), this protein is Glutathione hydrolase 6.